The primary structure comprises 228 residues: Extracellular protease inhibitor 10 (228 aa).

An N-terminal signal peptide occupies residues methionine 1–alanine 22. 3 Kazal-like domains span residues aspartate 23–serine 72, threonine 90–lysine 127, and glycine 156–leucine 208. N-linked (GlcNAc...) asparagine glycosylation occurs at asparagine 25. 3 cysteine pairs are disulfide-bonded: cysteine 26–cysteine 56, cysteine 30–cysteine 49, and cysteine 38–cysteine 70. Positions glutamate 69–glycine 92 are disordered. Over residues alanine 71–glycine 92 the composition is skewed to low complexity. 4 cysteine pairs are disulfide-bonded: cysteine 96-cysteine 126, cysteine 100-cysteine 119, cysteine 162-cysteine 193, and cysteine 167-cysteine 186. A glycan (N-linked (GlcNAc...) asparagine) is linked at asparagine 199.

As to quaternary structure, interacts with host subtilisin-like protease P69B.

It is found in the secreted. In terms of biological role, secreted effector that interacts with and inhibits the pathogenesis-related P69B subtilisin-like serine protease of host tomato. Inhibition of host proteases by a pathogen extracellular protease inhibitor forms a specific type of defense-counterdefense mechanism between plants and microbial pathogens. The polypeptide is Extracellular protease inhibitor 10 (Phytophthora infestans (strain T30-4) (Potato late blight agent)).